A 264-amino-acid chain; its full sequence is Thymidylate synthase (264 aa).

Arg-21 lines the dUMP pocket. Residue His-51 coordinates (6R)-5,10-methylene-5,6,7,8-tetrahydrofolate. Arg-126–Arg-127 is a binding site for dUMP. Cys-146 acts as the Nucleophile in catalysis. DUMP is bound by residues Arg-166–Asp-169, Asn-177, and His-207–Tyr-209. A (6R)-5,10-methylene-5,6,7,8-tetrahydrofolate-binding site is contributed by Asp-169. Ala-263 is a binding site for (6R)-5,10-methylene-5,6,7,8-tetrahydrofolate.

Belongs to the thymidylate synthase family. Bacterial-type ThyA subfamily. Homodimer.

Its subcellular location is the cytoplasm. The catalysed reaction is dUMP + (6R)-5,10-methylene-5,6,7,8-tetrahydrofolate = 7,8-dihydrofolate + dTMP. The protein operates within pyrimidine metabolism; dTTP biosynthesis. Its function is as follows. Catalyzes the reductive methylation of 2'-deoxyuridine-5'-monophosphate (dUMP) to 2'-deoxythymidine-5'-monophosphate (dTMP) while utilizing 5,10-methylenetetrahydrofolate (mTHF) as the methyl donor and reductant in the reaction, yielding dihydrofolate (DHF) as a by-product. This enzymatic reaction provides an intracellular de novo source of dTMP, an essential precursor for DNA biosynthesis. The sequence is that of Thymidylate synthase from Agrobacterium fabrum (strain C58 / ATCC 33970) (Agrobacterium tumefaciens (strain C58)).